The primary structure comprises 651 residues: Bromodomain-containing protein 7 (651 aa).

2 disordered regions span residues 36 to 133 (ELST…EVEQ) and 257 to 298 (KDKV…KKKD). The segment covering 58–69 (HKDRKRKKRKKG) has biased composition (basic residues). The Nuclear localization signal motif lies at 65–96 (KRKKGEKQVPGEEKEKRKRKVKEDKRKRDREH). The segment covering 70–105 (EKQVPGEEKEKRKRKVKEDKRKRDREHPDSEGEQEL) has biased composition (basic and acidic residues). The Bromo domain occupies 131 to 235 (VEQTPLQEAL…HSGMKILSQE (105 aa)). Over residues 271-298 (GSGKDKGEPVDGDTKAFKTPNKEHKKKD) the composition is skewed to basic and acidic residues. Residues 533-564 (SEEAEIFQRKLDETTKLLRELQDAQNERLSTK) adopt a coiled-coil conformation.

Its subcellular location is the nucleus. It is found in the chromosome. Acts both as coactivator and as corepressor. May play a role in chromatin remodeling. Participates in the Wnt signaling pathway. Transcriptional corepressor that down-regulates the expression of target genes. Binds to target promoters, leading to increased histone H3 acetylation. Coactivator for TP53-mediated activation of transcription of a set of target genes. Required for TP53-mediated cell-cycle arrest in response to oncogene activation. Inhibits cell cycle progression from G1 to S phase. The polypeptide is Bromodomain-containing protein 7 (BRD7) (Gallus gallus (Chicken)).